A 331-amino-acid chain; its full sequence is D-alanine--D-alanine ligase (331 aa).

Residues 122–328 (KLWYDAIGIP…FHEFLADCIE (207 aa)) form the ATP-grasp domain. 152 to 207 (AFDKWGKLFVKAARQGSSVGCYSVTKIEQLSDAIDKAFGFSHQVLVEKAVKPRELE) lines the ATP pocket. Positions 282, 295, and 297 each coordinate Mg(2+).

It belongs to the D-alanine--D-alanine ligase family. Mg(2+) is required as a cofactor. The cofactor is Mn(2+).

It localises to the cytoplasm. It carries out the reaction 2 D-alanine + ATP = D-alanyl-D-alanine + ADP + phosphate + H(+). It participates in cell wall biogenesis; peptidoglycan biosynthesis. Its function is as follows. Cell wall formation. This chain is D-alanine--D-alanine ligase, found in Vibrio vulnificus (strain CMCP6).